Here is a 148-residue protein sequence, read N- to C-terminus: Phospholipase A2-alpha (148 aa).

An N-terminal signal peptide occupies residues 1-20 (MAAPIILFSFLLFFSVSVSA). Intrachain disulfides connect cysteine 38-cysteine 66, cysteine 42-cysteine 72, cysteine 47-cysteine 122, cysteine 59-cysteine 79, cysteine 78-cysteine 105, and cysteine 85-cysteine 98. 3 residues coordinate Ca(2+): tyrosine 58, glycine 60, and tyrosine 63. Residue histidine 82 is part of the active site. Aspartate 83 contacts Ca(2+).

The protein belongs to the phospholipase A2 family. In terms of assembly, interacts with MYB30. Ca(2+) is required as a cofactor. As to expression, ubiquitous but expressed at a low level.

Its subcellular location is the secreted. The protein localises to the golgi apparatus. It localises to the cytoplasmic vesicle. The protein resides in the nucleus. The enzyme catalyses a 1,2-diacyl-sn-glycero-3-phosphocholine + H2O = a 1-acyl-sn-glycero-3-phosphocholine + a fatty acid + H(+). Its function is as follows. PA2 catalyzes the calcium-dependent hydrolysis of the 2-acyl groups in 3-sn-phosphoglycerides. Releases lysophospholipids (LPLs) and free fatty acids (FFAs) from membrane phospholipids in response to hormones and other external stimuli. Modulates the trafficking of PIN proteins to the plasma membrane. Negatively regulates MYB30 transcriptional activity and hypersensitive response control. The polypeptide is Phospholipase A2-alpha (Arabidopsis thaliana (Mouse-ear cress)).